The chain runs to 85 residues: Large ribosomal subunit protein bL27 (85 aa).

It belongs to the bacterial ribosomal protein bL27 family.

The polypeptide is Large ribosomal subunit protein bL27 (Ruthia magnifica subsp. Calyptogena magnifica).